The following is a 70-amino-acid chain: Probable non-specific lipid-transfer protein 2 (70 aa).

4 disulfide bridges follow: Cys4-Cys38, Cys12-Cys26, Cys27-Cys62, and Cys36-Cys69.

Its function is as follows. Potential phospholipid transfer protein. This chain is Probable non-specific lipid-transfer protein 2, found in Zea mays (Maize).